Here is a 145-residue protein sequence, read N- to C-terminus: Basic phospholipase A2 cPt10 (145 aa).

An N-terminal signal peptide occupies residues 1–21 (MYPAHLLVLLAVCVSLLGASA). A propeptide spanning residues 22–27 (IPPLPL) is cleaved from the precursor. 7 disulfide bridges follow: Cys38–Cys98, Cys54–Cys144, Cys56–Cys72, Cys71–Cys125, Cys78–Cys118, Cys87–Cys111, and Cys105–Cys116. Ca(2+) is bound by residues Tyr55, Gly57, and Gly59. The active site involves His75. Asp76 provides a ligand contact to Ca(2+). Asp119 is a catalytic residue.

It belongs to the phospholipase A2 family. Group I subfamily. D49 sub-subfamily. The cofactor is Ca(2+). Expressed by the venom gland.

Its subcellular location is the secreted. The enzyme catalyses a 1,2-diacyl-sn-glycero-3-phosphocholine + H2O = a 1-acyl-sn-glycero-3-phosphocholine + a fatty acid + H(+). Functionally, PLA2 catalyzes the calcium-dependent hydrolysis of the 2-acyl groups in 3-sn-phosphoglycerides. This Laticauda semifasciata (Black-banded sea krait) protein is Basic phospholipase A2 cPt10.